A 425-amino-acid chain; its full sequence is COP9 signalosome complex subunit 1 (425 aa).

A PCI domain is found at 219 to 379 (ASSGVPPEIY…KSKALQTLEN (161 aa)).

The protein belongs to the CSN1 family. Component of the COP9 signalosome (CSN) complex.

The protein resides in the cytoplasm. It is found in the nucleus. Component of the COP9 signalosome (CSN) complex that acts as an regulator of the ubiquitin (Ubl) conjugation pathway by mediating the deneddylation of the cullin subunit of SCF-type E3 ubiquitin-protein ligase complexes. The CSN complex is involved in the regulation of the circadian clock through its control of the stability of the SCF(FWD-1) complex. The chain is COP9 signalosome complex subunit 1 (csn-1) from Neurospora crassa (strain ATCC 24698 / 74-OR23-1A / CBS 708.71 / DSM 1257 / FGSC 987).